We begin with the raw amino-acid sequence, 1331 residues long: ABC multidrug transporter MDR2 (1331 aa).

2 stretches are compositionally biased toward basic and acidic residues: residues 1–20 and 31–41; these read MVEV…KQEN and SDKEKVAKKGN. A disordered region spans residues 1 to 51; the sequence is MVEVSEKPNTQDDGVSKQENRNPASSSSSTSDKEKVAKKGNSDATKSSTPE. A run of 4 helical transmembrane segments spans residues 93–113, 147–167, 219–239, and 242–262; these read MIFL…LPLF, YFVY…VGFI, KVGL…IGYV, and WKLA…MGGI. The region spanning 97–387 is the ABC transmembrane type-1 1 domain; sequence AIVSLASIAA…VAPNTQAFAS (291 aa). A glycan (N-linked (GlcNAc...) asparagine) is linked at Asn293. 2 helical membrane-spanning segments follow: residues 325-345 and 358-378; these read LGIM…LGFW and LSAI…IGNV. In terms of domain architecture, ABC transporter 1 spans 422–667; the sequence is IEFRGIKHIY…KGTYLQLVEA (246 aa). 457–464 contacts ATP; that stretch reads GPSGSGKS. Asn529 and Asn737 each carry an N-linked (GlcNAc...) asparagine glycan. The next 2 helical transmembrane spans lie at 762-782 and 810-830; these read LCGF…SVFF and FLML…IFAI. An ABC transmembrane type-1 2 domain is found at 764 to 1051; the sequence is GFFFAVLSGA…VFSFSPDMGK (288 aa). Asn860 is a glycosylation site (N-linked (GlcNAc...) asparagine). 4 helical membrane passes run 884–904, 910–930, 995–1015, and 1025–1045; these read LGTI…ALAF, LVCI…FWIL, ASQS…GGLL, and FFLC…VFSF. The ABC transporter 2 domain occupies 1086–1324; that stretch reads IEFRDVHFRY…KGRYYELVHM (239 aa). N-linked (GlcNAc...) asparagine glycosylation occurs at Asn1108. 1121–1128 is a binding site for ATP; it reads GPSGCGKS.

This sequence belongs to the ABC transporter superfamily. ABCB family. Multidrug resistance exporter (TC 3.A.1.201) subfamily.

The protein resides in the cell membrane. The catalysed reaction is itraconazole(in) + ATP + H2O = itraconazole(out) + ADP + phosphate + H(+). Pleiotropic ABC efflux transporter that may be involved in the modulation susceptibility to a wide range of unrelated cytotoxic compounds. This Trichophyton equinum (strain ATCC MYA-4606 / CBS 127.97) (Horse ringworm fungus) protein is ABC multidrug transporter MDR2.